Here is a 66-residue protein sequence, read N- to C-terminus: Large ribosomal subunit protein uL29 (66 aa).

This sequence belongs to the universal ribosomal protein uL29 family.

The polypeptide is Large ribosomal subunit protein uL29 (Mesorhizobium japonicum (strain LMG 29417 / CECT 9101 / MAFF 303099) (Mesorhizobium loti (strain MAFF 303099))).